Reading from the N-terminus, the 452-residue chain is Phosphoglucosamine mutase (452 aa).

The active-site Phosphoserine intermediate is S108. Residues S108, D247, D249, and D251 each contribute to the Mg(2+) site. S108 is subject to Phosphoserine.

Belongs to the phosphohexose mutase family. It depends on Mg(2+) as a cofactor. In terms of processing, activated by phosphorylation.

The catalysed reaction is alpha-D-glucosamine 1-phosphate = D-glucosamine 6-phosphate. In terms of biological role, catalyzes the conversion of glucosamine-6-phosphate to glucosamine-1-phosphate. This chain is Phosphoglucosamine mutase, found in Burkholderia mallei (strain NCTC 10247).